The following is a 285-amino-acid chain: Small ribosomal subunit protein uS2 (285 aa).

The disordered stretch occupies residues asparagine 262–phenylalanine 285. Over residues alanine 271–phenylalanine 285 the composition is skewed to low complexity.

This sequence belongs to the universal ribosomal protein uS2 family. In terms of assembly, component of the small ribosomal subunit. Mature ribosomes consist of a small (40S) and a large (60S) subunit. The 40S subunit contains about 33 different proteins and 1 molecule of RNA (18S). The 60S subunit contains about 49 different proteins and 3 molecules of RNA (28S, 5.8S and 5S). Interacts with ribosomal protein S21.

The protein localises to the cytoplasm. Its function is as follows. Required for the assembly and/or stability of the 40S ribosomal subunit. Required for the processing of the 20S rRNA-precursor to mature 18S rRNA in a late step of the maturation of 40S ribosomal subunits. In Anopheles gambiae (African malaria mosquito), this protein is Small ribosomal subunit protein uS2.